Consider the following 81-residue polypeptide: Large ribosomal subunit protein bL28 (81 aa).

Belongs to the bacterial ribosomal protein bL28 family. Part of the 50S ribosomal subunit.

The protein is Large ribosomal subunit protein bL28 of Deinococcus radiodurans (strain ATCC 13939 / DSM 20539 / JCM 16871 / CCUG 27074 / LMG 4051 / NBRC 15346 / NCIMB 9279 / VKM B-1422 / R1).